We begin with the raw amino-acid sequence, 249 residues long: Isoprenyl transferase (249 aa).

Asp25 is a catalytic residue. Residue Asp25 coordinates Mg(2+). Substrate-binding positions include 26–29 (GNGR), Trp30, Arg38, His42, and 70–72 (STE). Asn73 acts as the Proton acceptor in catalysis. Residues Trp74, Arg76, Arg197, and 203–205 (RLS) contribute to the substrate site. Glu216 serves as a coordination point for Mg(2+).

It belongs to the UPP synthase family. As to quaternary structure, homodimer. The cofactor is Mg(2+).

In terms of biological role, catalyzes the condensation of isopentenyl diphosphate (IPP) with allylic pyrophosphates generating different type of terpenoids. The polypeptide is Isoprenyl transferase (Streptococcus pyogenes serotype M1).